Consider the following 479-residue polypeptide: Sodium-coupled neutral amino acid transporter 5 (479 aa).

The Cytoplasmic portion of the chain corresponds to 1 to 61 (MAISCAVGME…LDFEGKTSFG (61 aa)). A helical membrane pass occupies residues 62–84 (MSVFNLSNAIMGSGILGLAYAMA). Residues 85–97 (HTGVIFFLALLLC) lie on the Extracellular side of the membrane. The chain crosses the membrane as a helical span at residues 98 to 118 (IALLSSYSIHLLLTCASVVGI). Topologically, residues 119–135 (RAYEQLGQRAFGPAGKV) are cytoplasmic. Residues 136 to 156 (VVAIIICLHNVGAMSSYLFII) traverse the membrane as a helical segment. Residues 157-176 (KSELPLVIGTFLHMDPEGDW) are Extracellular-facing. A helical transmembrane segment spans residues 177 to 197 (FLKGNLLIILVSLLIILPLAL). Topologically, residues 198 to 202 (MKHLG) are cytoplasmic. The helical transmembrane segment at 203-223 (YLGYTSSLSLTCMLFFLISVI) threads the bilayer. The Extracellular portion of the chain corresponds to 224–264 (YKKFQIGCDVSHNDTVVEAEQAPLQAFNSSCEAELFTVDSQ). Residues C231 and C254 are joined by a disulfide bond. N-linked (GlcNAc...) asparagine glycosylation occurs at N236. Residues 265-285 (MSYTVPIMAFAFVCHPEVLPI) traverse the membrane as a helical segment. Residues 286–302 (YTELCRPTQRRMQAVAN) are Cytoplasmic-facing. The chain crosses the membrane as a helical span at residues 303–323 (MSIGAMFIMYGLTATFGYLTF). Residues 324-341 (YSTVKAEMLEMYTQEDML) lie on the Extracellular side of the membrane. Residues 342 to 362 (ILCVRLAVLLAVTLTVPVVLF) form a helical membrane-spanning segment. Residues 363–383 (PIRRALQQLLFPSKAFSWLRH) are Cytoplasmic-facing. A helical transmembrane segment spans residues 384 to 404 (VAIALILLILVNILVICVPTI). Over 405-406 (RD) the chain is Extracellular. Residues 407–427 (IFGFIGSTSAPSLIFILPSVF) traverse the membrane as a helical segment. The Cytoplasmic portion of the chain corresponds to 428–446 (YLRIVPTEVEPLFSWPKIQ). The helical transmembrane segment at 447–467 (ALCFGVLGVLFMAISLGFMFA) threads the bilayer. Topologically, residues 468-479 (NWATGQSRMSGH) are extracellular.

The protein belongs to the amino acid/polyamine transporter 2 family. In terms of tissue distribution, expressed in the ganglion cell layer and the nerve fiber layer (at protein level). Also expreseed in the cells of the inner nuclear layer and in the inner plexiform layer (at protein level). Expressed in Mueller and ganglion retinal cell.

It is found in the cell membrane. The catalysed reaction is L-glutamine(out) + Na(+)(out) + H(+)(in) = L-glutamine(in) + Na(+)(in) + H(+)(out). The enzyme catalyses L-serine(out) + Na(+)(out) + H(+)(in) = L-serine(in) + Na(+)(in) + H(+)(out). It catalyses the reaction L-alanine(out) + Na(+)(out) + H(+)(in) = L-alanine(in) + Na(+)(in) + H(+)(out). It carries out the reaction glycine(out) + Na(+)(out) + H(+)(in) = glycine(in) + Na(+)(in) + H(+)(out). The catalysed reaction is L-asparagine(out) + Na(+)(out) + H(+)(in) = L-asparagine(in) + Na(+)(in) + H(+)(out). The enzyme catalyses L-histidine(out) + Na(+)(out) + H(+)(in) = L-histidine(in) + Na(+)(in) + H(+)(out). It catalyses the reaction L-cysteine(out) + Na(+)(out) + H(+)(in) = L-cysteine(in) + Na(+)(in) + H(+)(out). Its activity is regulated as follows. Not inhibited by lithium. Partial allosteric regulation on ions sodium binding. Symporter that cotransports neutral amino acids and sodium ions, coupled to an H(+) antiporter activity. Releases L-glutamine and glycine from astroglial cells and may participate in the glutamate/GABA-L-glutamine cycle and the NMDA receptors activation. In addition, contributes significantly to L-glutamine uptake in retina, namely in ganglion and Mueller cells therefore, participates in the retinal glutamate-glutamine cycle. The transport activity is pH sensitive, Li(+) tolerant, bidirectional and associated with large uncoupled fluxes of protons. Moreover functions in both direction and is associated with large uncoupled fluxes of protons. The transport is electroneutral coupled to the cotransport of 1 Na(+) and the antiport of 1 H(+). May have a particular importance for modulation of net hepatic glutamine flux. This Mus musculus (Mouse) protein is Sodium-coupled neutral amino acid transporter 5.